The sequence spans 231 residues: ATP-dependent dethiobiotin synthetase BioD 2 (231 aa).

13–18 serves as a coordination point for ATP; sequence SVGKTV. Mg(2+) is bound at residue Thr-17. Lys-38 is a catalytic residue. ATP contacts are provided by residues Asp-55, 112-115, 172-173, 201-203, and Gln-208; these read EGTG, NR, and PYL. Residues Asp-55 and Glu-112 each contribute to the Mg(2+) site.

This sequence belongs to the dethiobiotin synthetase family. As to quaternary structure, homodimer. Mg(2+) is required as a cofactor.

Its subcellular location is the cytoplasm. The catalysed reaction is (7R,8S)-7,8-diammoniononanoate + CO2 + ATP = (4R,5S)-dethiobiotin + ADP + phosphate + 3 H(+). It participates in cofactor biosynthesis; biotin biosynthesis; biotin from 7,8-diaminononanoate: step 1/2. Functionally, catalyzes a mechanistically unusual reaction, the ATP-dependent insertion of CO2 between the N7 and N8 nitrogen atoms of 7,8-diaminopelargonic acid (DAPA, also called 7,8-diammoniononanoate) to form a ureido ring. The polypeptide is ATP-dependent dethiobiotin synthetase BioD 2 (Escherichia coli O157:H7).